A 221-amino-acid chain; its full sequence is Urease accessory protein UreG (221 aa).

Position 19-26 (19-26) interacts with GTP; it reads GPVGSGKT.

This sequence belongs to the SIMIBI class G3E GTPase family. UreG subfamily. As to quaternary structure, homodimer. UreD, UreF and UreG form a complex that acts as a GTP-hydrolysis-dependent molecular chaperone, activating the urease apoprotein by helping to assemble the nickel containing metallocenter of UreC. The UreE protein probably delivers the nickel.

The protein resides in the cytoplasm. Functionally, facilitates the functional incorporation of the urease nickel metallocenter. This process requires GTP hydrolysis, probably effectuated by UreG. Its function is as follows. Expression of the urease operon increases the likelihood of bacterial survival by contributing to acid resistance in vitro and in vivo in BALB/c mice. Y.enterocolitica enters the body via an oral path and must survive the acidic stomach before being able to colonize the intestinal mucosa. This is Urease accessory protein UreG from Yersinia enterocolitica.